The sequence spans 359 residues: Peptide chain release factor 1 (359 aa).

Gln234 is modified (N5-methylglutamine).

Belongs to the prokaryotic/mitochondrial release factor family. Methylated by PrmC. Methylation increases the termination efficiency of RF1.

It is found in the cytoplasm. Peptide chain release factor 1 directs the termination of translation in response to the peptide chain termination codons UAG and UAA. The sequence is that of Peptide chain release factor 1 from Clavibacter michiganensis subsp. michiganensis (strain NCPPB 382).